The sequence spans 411 residues: LL-diaminopimelate aminotransferase (411 aa).

2 residues coordinate substrate: Tyr16 and Gly43. Pyridoxal 5'-phosphate contacts are provided by residues Tyr73, 109–110 (AK), Tyr133, Asn188, Tyr219, and 247–249 (SYS). Residues Lys110, Tyr133, and Asn188 each contribute to the substrate site. An N6-(pyridoxal phosphate)lysine modification is found at Lys250. Pyridoxal 5'-phosphate is bound by residues Arg258 and Asn293. The substrate site is built by Asn293 and Arg389.

It belongs to the class-I pyridoxal-phosphate-dependent aminotransferase family. LL-diaminopimelate aminotransferase subfamily. As to quaternary structure, homodimer. Requires pyridoxal 5'-phosphate as cofactor.

It carries out the reaction (2S,6S)-2,6-diaminopimelate + 2-oxoglutarate = (S)-2,3,4,5-tetrahydrodipicolinate + L-glutamate + H2O + H(+). It functions in the pathway amino-acid biosynthesis; L-lysine biosynthesis via DAP pathway; LL-2,6-diaminopimelate from (S)-tetrahydrodipicolinate (aminotransferase route): step 1/1. Involved in the synthesis of meso-diaminopimelate (m-DAP or DL-DAP), required for both lysine and peptidoglycan biosynthesis. Catalyzes the direct conversion of tetrahydrodipicolinate to LL-diaminopimelate. In Methanosphaera stadtmanae (strain ATCC 43021 / DSM 3091 / JCM 11832 / MCB-3), this protein is LL-diaminopimelate aminotransferase.